A 375-amino-acid polypeptide reads, in one-letter code: Nucleolysin TIAR (375 aa).

RRM domains are found at residues Arg-9 to Thr-85 and Phe-97 to Arg-175. Position 122 is an N6-acetyllysine (Lys-122). Position 201 is a phosphoserine (Ser-201). The region spanning Cys-205–Glu-277 is the RRM 3 domain. The interval Phe-345–Gln-375 is disordered. A compositionally biased stretch (pro residues) spans Gly-352 to Asn-363.

As to quaternary structure, interacts with FASTK. In terms of processing, phosphorylated by MAPK14 following DNA damage, releasing TIAR from GADD45A mRNA. In terms of tissue distribution, expressed in brain, heart, kidney, lung and skeletal muscle.

The protein localises to the nucleus. The protein resides in the cytoplasm. Its subcellular location is the cytolytic granule. It localises to the stress granule. In terms of biological role, RNA-binding protein involved in alternative pre-RNA splicing and in cytoplasmic stress granules formation. Shows a preference for uridine-rich RNAs. Activates splicing of alternative exons with weak 5' splice sites followed by a U-rich stretch on its own pre-mRNA and on TIA1 mRNA. Promotes the inclusion of TIA1 exon 5 to give rise to the long isoform (isoform a) of TIA1. Acts downstream of the stress-induced phosphorylation of EIF2S1/EIF2A to promote the recruitment of untranslated mRNAs to cytoplasmic stress granules (SG). Possesses nucleolytic activity against cytotoxic lymphocyte target cells. May be involved in apoptosis. This Homo sapiens (Human) protein is Nucleolysin TIAR (TIAL1).